The primary structure comprises 930 residues: Translation initiation factor IF-2 (930 aa).

Residues 50–67 (FKPAAAPKVEAKPAAPKV) are compositionally biased toward low complexity. Disordered stretches follow at residues 50-195 (FKPA…PRID) and 260-346 (EVVP…HELP). Basic and acidic residues-rich tracts occupy residues 68–90 (SAEK…EAKP) and 110–125 (FKAE…AERR). Positions 129-141 (KGNNRDQQQNGNR) are enriched in low complexity. Basic and acidic residues-rich tracts occupy residues 157 to 167 (RDNRRFNDQAK) and 262 to 295 (VPEK…DGPR). Residues 309–318 (NQKNSNWNNN) show a composition bias toward low complexity. The segment covering 337–346 (VTERKFHELP) has biased composition (basic and acidic residues). The region spanning 432 to 599 (ERPPVVTIMG…TVLLVAEIQE (168 aa)) is the tr-type G domain. Positions 441 to 448 (GHVDHGKT) are G1. GTP is bound at residue 441–448 (GHVDHGKT). Residues 466-470 (GITQH) are G2. The segment at 487–490 (DTPG) is G3. Residues 487–491 (DTPGH) and 541–544 (NKID) contribute to the GTP site. A G4 region spans residues 541–544 (NKID). The G5 stretch occupies residues 577-579 (SAK).

The protein belongs to the TRAFAC class translation factor GTPase superfamily. Classic translation factor GTPase family. IF-2 subfamily.

It is found in the cytoplasm. Its function is as follows. One of the essential components for the initiation of protein synthesis. Protects formylmethionyl-tRNA from spontaneous hydrolysis and promotes its binding to the 30S ribosomal subunits. Also involved in the hydrolysis of GTP during the formation of the 70S ribosomal complex. This chain is Translation initiation factor IF-2, found in Streptococcus pneumoniae (strain ATCC BAA-255 / R6).